Reading from the N-terminus, the 409-residue chain is Elongation factor Tu (409 aa).

The tr-type G domain maps to 10-214 (KPHVNIGTIG…AVDSYIPTPE (205 aa)). The segment at 19–26 (GHVDHGKT) is G1. Position 19-26 (19-26 (GHVDHGKT)) interacts with GTP. T26 serves as a coordination point for Mg(2+). The G2 stretch occupies residues 60 to 64 (GITIN). Positions 81–84 (DCPG) are G3. Residues 81 to 85 (DCPGH) and 136 to 139 (NKVD) contribute to the GTP site. A G4 region spans residues 136 to 139 (NKVD). Residues 174 to 176 (SGL) form a G5 region.

It belongs to the TRAFAC class translation factor GTPase superfamily. Classic translation factor GTPase family. EF-Tu/EF-1A subfamily. Monomer.

The protein localises to the cytoplasm. The catalysed reaction is GTP + H2O = GDP + phosphate + H(+). Its function is as follows. GTP hydrolase that promotes the GTP-dependent binding of aminoacyl-tRNA to the A-site of ribosomes during protein biosynthesis. This chain is Elongation factor Tu, found in Cyanothece sp. (strain PCC 7425 / ATCC 29141).